Reading from the N-terminus, the 145-residue chain is Large ribosomal subunit protein uL15 (145 aa).

Residues 1 to 52 (MFNLLKPKGASKRRKIVGRGPGSGLGKTSGRGQKGQKARNTSPRLGFEGGQT) form a disordered region. Over residues 19-33 (RGPGSGLGKTSGRGQ) the composition is skewed to gly residues.

Belongs to the universal ribosomal protein uL15 family. In terms of assembly, part of the 50S ribosomal subunit.

Binds to the 23S rRNA. The polypeptide is Large ribosomal subunit protein uL15 (Borreliella burgdorferi (strain ATCC 35210 / DSM 4680 / CIP 102532 / B31) (Borrelia burgdorferi)).